Reading from the N-terminus, the 91-residue chain is Cell division topological specificity factor (91 aa).

This sequence belongs to the MinE family.

Prevents the cell division inhibition by proteins MinC and MinD at internal division sites while permitting inhibition at polar sites. This ensures cell division at the proper site by restricting the formation of a division septum at the midpoint of the long axis of the cell. The protein is Cell division topological specificity factor of Chloroflexus aggregans (strain MD-66 / DSM 9485).